The chain runs to 365 residues: 2-aminoethylphosphonate--pyruvate transaminase (365 aa).

An N6-(pyridoxal phosphate)lysine modification is found at K194.

Belongs to the class-V pyridoxal-phosphate-dependent aminotransferase family. PhnW subfamily. As to quaternary structure, homodimer. Pyridoxal 5'-phosphate serves as cofactor.

The catalysed reaction is (2-aminoethyl)phosphonate + pyruvate = phosphonoacetaldehyde + L-alanine. Functionally, involved in phosphonate degradation. The chain is 2-aminoethylphosphonate--pyruvate transaminase from Bacillus cytotoxicus (strain DSM 22905 / CIP 110041 / 391-98 / NVH 391-98).